The sequence spans 1413 residues: DNA-directed RNA polymerase subunit beta' (1413 aa).

Cys70, Cys72, Cys85, and Cys88 together coordinate Zn(2+). The Mg(2+) site is built by Asp460, Asp462, and Asp464. The Zn(2+) site is built by Cys819, Cys893, Cys900, and Cys903.

Belongs to the RNA polymerase beta' chain family. As to quaternary structure, the RNAP catalytic core consists of 2 alpha, 1 beta, 1 beta' and 1 omega subunit. When a sigma factor is associated with the core the holoenzyme is formed, which can initiate transcription. Mg(2+) is required as a cofactor. Zn(2+) serves as cofactor.

It catalyses the reaction RNA(n) + a ribonucleoside 5'-triphosphate = RNA(n+1) + diphosphate. Its function is as follows. DNA-dependent RNA polymerase catalyzes the transcription of DNA into RNA using the four ribonucleoside triphosphates as substrates. This chain is DNA-directed RNA polymerase subunit beta', found in Burkholderia ambifaria (strain MC40-6).